A 288-amino-acid chain; its full sequence is Elongation factor Ts (288 aa).

The involved in Mg(2+) ion dislocation from EF-Tu stretch occupies residues 82 to 85; that stretch reads TDFV.

This sequence belongs to the EF-Ts family.

It is found in the cytoplasm. In terms of biological role, associates with the EF-Tu.GDP complex and induces the exchange of GDP to GTP. It remains bound to the aminoacyl-tRNA.EF-Tu.GTP complex up to the GTP hydrolysis stage on the ribosome. The protein is Elongation factor Ts of Chlorobaculum tepidum (strain ATCC 49652 / DSM 12025 / NBRC 103806 / TLS) (Chlorobium tepidum).